The following is a 912-amino-acid chain: Metabotropic glutamate receptor 4 (912 aa).

Positions methionine 1–glycine 32 are cleaved as a signal peptide. The Extracellular portion of the chain corresponds to lysine 33–tryptophan 587. A disulfide bridge links cysteine 67 with cysteine 109. Asparagine 98 carries N-linked (GlcNAc...) asparagine glycosylation. Residues serine 159, alanine 180–threonine 182, and tyrosine 230 each bind L-glutamate. 7 disulfide bridges follow: cysteine 249–cysteine 538, cysteine 372–cysteine 388, cysteine 428–cysteine 435, cysteine 520–cysteine 539, cysteine 524–cysteine 542, cysteine 545–cysteine 557, and cysteine 560–cysteine 573. An N-linked (GlcNAc...) asparagine glycan is attached at asparagine 301. Position 312 (aspartate 312) interacts with L-glutamate. L-glutamate is bound at residue lysine 405. 2 N-linked (GlcNAc...) asparagine glycosylation sites follow: asparagine 454 and asparagine 484. Asparagine 569 is a glycosylation site (N-linked (GlcNAc...) asparagine). The helical transmembrane segment at alanine 588–valine 610 threads the bilayer. Over arginine 611 to glutamate 624 the chain is Cytoplasmic. Residues leucine 625–alanine 645 form a helical membrane-spanning segment. Topologically, residues glutamate 646–arginine 656 are extracellular. A helical transmembrane segment spans residues isoleucine 657–asparagine 675. At arginine 676–glutamine 699 the chain is on the cytoplasmic side. A helical transmembrane segment spans residues leucine 700–valine 720. The Extracellular segment spans residues aspartate 721–aspartate 750. A helical transmembrane segment spans residues leucine 751–isoleucine 772. The Cytoplasmic segment spans residues lysine 773 to lysine 785. Residues proline 786–threonine 808 form a helical membrane-spanning segment. Over serine 809 to threonine 821 the chain is Extracellular. The chain crosses the membrane as a helical span at residues leucine 822 to phenylalanine 847. The Cytoplasmic segment spans residues histidine 848–isoleucine 912.

Belongs to the G-protein coupled receptor 3 family. Interacts with PICK1. Is widely distributed in the CNS. Predominant expression is seen in the granule cells of the cerebellum.

Its subcellular location is the cell membrane. In terms of biological role, G-protein coupled receptor for glutamate. Ligand binding causes a conformation change that triggers signaling via guanine nucleotide-binding proteins (G proteins) and modulates the activity of down-stream effectors. Signaling inhibits adenylate cyclase activity. The chain is Metabotropic glutamate receptor 4 (Grm4) from Rattus norvegicus (Rat).